The primary structure comprises 543 residues: UPF0324 membrane protein RB9488 (543 aa).

The segment covering 1–22 has biased composition (low complexity); sequence MNSNTPSSDNSSPDNVSPDTSD. Residues 1 to 41 are disordered; the sequence is MNSNTPSSDNSSPDNVSPDTSDMASAGDDSALATPPPRPSL. The chain crosses the membrane as a helical span at residues 51–73; sequence WWAIWCAALLLLIAFAAVWIGQP. A disordered region spans residues 91–120; it reads VETAPENAGPSAEAENEAIETENTAPAENA. 11 helical membrane-spanning segments follow: residues 160-182, 189-211, 221-243, 270-292, 307-329, 336-358, 368-390, 403-422, 437-459, 479-496, and 511-533; these read ISSS…AFAN, AGAF…WMSG, EYAL…PDFL, LALG…ITTY, NMVI…AAAC, LSLS…PAVI, GGAW…AVLG, IQNI…WVTF, IWYR…SILY, TLRG…GLET, and LVLY…YLMF.

It belongs to the UPF0324 family.

The protein localises to the cell membrane. In Rhodopirellula baltica (strain DSM 10527 / NCIMB 13988 / SH1), this protein is UPF0324 membrane protein RB9488.